Here is a 528-residue protein sequence, read N- to C-terminus: Peptide chain release factor 3 (528 aa).

In terms of domain architecture, tr-type G spans 10 to 278 (DKRRTFGIIS…TFVDLAPAPQ (269 aa)). Residues 19–26 (SHPDAGKT), 87–91 (DTPGH), and 141–144 (NKLD) each bind GTP.

It belongs to the TRAFAC class translation factor GTPase superfamily. Classic translation factor GTPase family. PrfC subfamily.

The protein resides in the cytoplasm. Its function is as follows. Increases the formation of ribosomal termination complexes and stimulates activities of RF-1 and RF-2. It binds guanine nucleotides and has strong preference for UGA stop codons. It may interact directly with the ribosome. The stimulation of RF-1 and RF-2 is significantly reduced by GTP and GDP, but not by GMP. The polypeptide is Peptide chain release factor 3 (Oleidesulfovibrio alaskensis (strain ATCC BAA-1058 / DSM 17464 / G20) (Desulfovibrio alaskensis)).